A 347-amino-acid chain; its full sequence is Phenylalanine--tRNA ligase alpha subunit (347 aa).

Glu-265 serves as a coordination point for Mg(2+).

This sequence belongs to the class-II aminoacyl-tRNA synthetase family. Phe-tRNA synthetase alpha subunit type 1 subfamily. Tetramer of two alpha and two beta subunits. Requires Mg(2+) as cofactor.

The protein resides in the cytoplasm. The catalysed reaction is tRNA(Phe) + L-phenylalanine + ATP = L-phenylalanyl-tRNA(Phe) + AMP + diphosphate + H(+). This chain is Phenylalanine--tRNA ligase alpha subunit, found in Wolbachia pipientis wMel.